We begin with the raw amino-acid sequence, 57 residues long: Large ribosomal subunit protein bL32c (57 aa).

It belongs to the bacterial ribosomal protein bL32 family.

Its subcellular location is the plastid. It localises to the chloroplast. This is Large ribosomal subunit protein bL32c from Liriodendron tulipifera (Tuliptree).